The primary structure comprises 134 residues: MPTIQQLIRQERELLKRKTKSPALKGCPQRRGVCTRVYTTTPKKPNSALRKVARVRLTSGFEVTAYIPGIGHNLQEHSVVMIRGGRVKDLPGVRYHIIRGTLDTAGVKDRKQGRSKYGAKRPKPGEAAATGKKK.

At Asp-89 the chain carries 3-methylthioaspartic acid. The segment at 103 to 134 (DTAGVKDRKQGRSKYGAKRPKPGEAAATGKKK) is disordered. Residues 113–122 (GRSKYGAKRP) show a composition bias toward basic residues.

This sequence belongs to the universal ribosomal protein uS12 family. Part of the 30S ribosomal subunit. Contacts proteins S8 and S17. May interact with IF1 in the 30S initiation complex.

With S4 and S5 plays an important role in translational accuracy. In terms of biological role, interacts with and stabilizes bases of the 16S rRNA that are involved in tRNA selection in the A site and with the mRNA backbone. Located at the interface of the 30S and 50S subunits, it traverses the body of the 30S subunit contacting proteins on the other side and probably holding the rRNA structure together. The combined cluster of proteins S8, S12 and S17 appears to hold together the shoulder and platform of the 30S subunit. This Thermosynechococcus vestitus (strain NIES-2133 / IAM M-273 / BP-1) protein is Small ribosomal subunit protein uS12.